The primary structure comprises 222 residues: Ribonuclease HII (222 aa).

One can recognise an RNase H type-2 domain in the interval Asp17–Ser206. Positions 23, 24, and 115 each coordinate a divalent metal cation.

Belongs to the RNase HII family. It depends on Mn(2+) as a cofactor. Mg(2+) serves as cofactor.

Its subcellular location is the cytoplasm. The catalysed reaction is Endonucleolytic cleavage to 5'-phosphomonoester.. Functionally, endonuclease that specifically degrades the RNA of RNA-DNA hybrids. This Pseudomonas savastanoi pv. phaseolicola (strain 1448A / Race 6) (Pseudomonas syringae pv. phaseolicola (strain 1448A / Race 6)) protein is Ribonuclease HII.